We begin with the raw amino-acid sequence, 198 residues long: MEERNEQVVEETKEAQTEEATIEKNSEESVTEEATEETVVEEKSEAALLQEKVDELQAKLTETEGRMLRLQADFENYKRRVQLDKQAAEKYRAQSLVSDILPALDNFERAMQVEASDEQTKSLLQGMEMVYRQLLEALNKEGVEMIEAVGKQFDPHEHQAVMQVEDSEFESNAVVEEFQKGYKLKDRVIRPSMVKVNQ.

Positions 1–27 (MEERNEQVVEETKEAQTEEATIEKNSE) are enriched in basic and acidic residues. The tract at residues 1-39 (MEERNEQVVEETKEAQTEEATIEKNSEESVTEEATEETV) is disordered. Acidic residues predominate over residues 29–39 (SVTEEATEETV).

It belongs to the GrpE family. As to quaternary structure, homodimer.

It localises to the cytoplasm. Its function is as follows. Participates actively in the response to hyperosmotic and heat shock by preventing the aggregation of stress-denatured proteins, in association with DnaK and GrpE. It is the nucleotide exchange factor for DnaK and may function as a thermosensor. Unfolded proteins bind initially to DnaJ; upon interaction with the DnaJ-bound protein, DnaK hydrolyzes its bound ATP, resulting in the formation of a stable complex. GrpE releases ADP from DnaK; ATP binding to DnaK triggers the release of the substrate protein, thus completing the reaction cycle. Several rounds of ATP-dependent interactions between DnaJ, DnaK and GrpE are required for fully efficient folding. The polypeptide is Protein GrpE (Bacillus cytotoxicus (strain DSM 22905 / CIP 110041 / 391-98 / NVH 391-98)).